We begin with the raw amino-acid sequence, 344 residues long: tRNA N6-adenosine threonylcarbamoyltransferase (344 aa).

The Fe cation site is built by H112 and H116. Substrate is bound by residues 134–138 (LASGG), D167, G180, and N280. Residue D308 participates in Fe cation binding.

The protein belongs to the KAE1 / TsaD family. The cofactor is Fe(2+).

It localises to the cytoplasm. The catalysed reaction is L-threonylcarbamoyladenylate + adenosine(37) in tRNA = N(6)-L-threonylcarbamoyladenosine(37) in tRNA + AMP + H(+). Its function is as follows. Required for the formation of a threonylcarbamoyl group on adenosine at position 37 (t(6)A37) in tRNAs that read codons beginning with adenine. Is involved in the transfer of the threonylcarbamoyl moiety of threonylcarbamoyl-AMP (TC-AMP) to the N6 group of A37, together with TsaE and TsaB. TsaD likely plays a direct catalytic role in this reaction. In Rickettsia peacockii (strain Rustic), this protein is tRNA N6-adenosine threonylcarbamoyltransferase.